The following is a 468-amino-acid chain: Phosphatidylglycerol--prolipoprotein diacylglyceryl transferase (468 aa).

3 consecutive transmembrane segments (helical) span residues 21–41, 56–76, and 96–116; these read LPVR…LLIG, YDIA…YHLA, and IWDG…GAWI. Arg144 serves as a coordination point for a 1,2-diacyl-sn-glycero-3-phospho-(1'-sn-glycerol). The next 3 helical transmembrane spans lie at 192–212, 218–238, and 256–276; these read VVQP…VALI, FIIG…AGRF, and INSF…ILAP. The disordered stretch occupies residues 349 to 468; it reads VVQVADRDGE…RWWRLRRRRQ (120 aa). The span at 391-406 shows a compositional bias: low complexity; that stretch reads AEAASAAPEEPAALAS. Basic and acidic residues predominate over residues 445 to 455; the sequence is DGIRRQDDFSS. Positions 456–468 are enriched in basic residues; sequence RRRRWWRLRRRRQ.

The protein belongs to the Lgt family.

The protein localises to the cell membrane. The enzyme catalyses L-cysteinyl-[prolipoprotein] + a 1,2-diacyl-sn-glycero-3-phospho-(1'-sn-glycerol) = an S-1,2-diacyl-sn-glyceryl-L-cysteinyl-[prolipoprotein] + sn-glycerol 1-phosphate + H(+). It participates in protein modification; lipoprotein biosynthesis (diacylglyceryl transfer). In terms of biological role, catalyzes the transfer of the diacylglyceryl group from phosphatidylglycerol to the sulfhydryl group of the N-terminal cysteine of a prolipoprotein, the first step in the formation of mature lipoproteins. This is Phosphatidylglycerol--prolipoprotein diacylglyceryl transferase from Mycobacterium bovis (strain ATCC BAA-935 / AF2122/97).